The primary structure comprises 177 residues: NAD(P)H-quinone oxidoreductase subunit 6, chloroplastic (177 aa).

The next 5 helical transmembrane spans lie at 10-30 (FLLVFLGLGFIMGGLGVVLLT), 32-52 (PIFSAFSLGLVLVCTSLFYTP), 61-81 (AQLLIYVGAINVLIIFAVMFM), 92-112 (LWTVGDGVTSLVCTSIFVSLI), and 152-172 (FFLPFELISIILLVALIGAIS).

It belongs to the complex I subunit 6 family. As to quaternary structure, NDH is composed of at least 16 different subunits, 5 of which are encoded in the nucleus.

The protein localises to the plastid. It localises to the chloroplast thylakoid membrane. The catalysed reaction is a plastoquinone + NADH + (n+1) H(+)(in) = a plastoquinol + NAD(+) + n H(+)(out). The enzyme catalyses a plastoquinone + NADPH + (n+1) H(+)(in) = a plastoquinol + NADP(+) + n H(+)(out). Functionally, NDH shuttles electrons from NAD(P)H:plastoquinone, via FMN and iron-sulfur (Fe-S) centers, to quinones in the photosynthetic chain and possibly in a chloroplast respiratory chain. The immediate electron acceptor for the enzyme in this species is believed to be plastoquinone. Couples the redox reaction to proton translocation, and thus conserves the redox energy in a proton gradient. The polypeptide is NAD(P)H-quinone oxidoreductase subunit 6, chloroplastic (ndhG) (Ranunculus macranthus (Large buttercup)).